Consider the following 918-residue polypeptide: Protein SEY1 homolog (918 aa).

Over 1–701 (MESSNHLPNK…AGTSVSSWRN (701 aa)) the chain is Cytoplasmic. Positions 46–280 (GFKFNVVTIL…VPSDGFFVYS (235 aa)) constitute a GB1/RHD3-type G domain. Residue 56–63 (GSQSSGKS) coordinates GTP. Positions 554–626 (SLVLLLKATQ…DALTLLQVLK (73 aa)) form a coiled coil. Residues 702 to 722 (IPPVFWLVLLVLGWNELRAAF) traverse the membrane as a helical segment. Residues 723–725 (RVL) lie on the Lumenal side of the membrane. A helical transmembrane segment spans residues 726 to 746 (LKFYILIPLLIVSYFTFSYSA). Residues 747–918 (NKLLGPKANE…CGKAVHLAQW (172 aa)) lie on the Cytoplasmic side of the membrane.

This sequence belongs to the TRAFAC class dynamin-like GTPase superfamily. GB1/RHD3 GTPase family. RHD3 subfamily.

It is found in the endoplasmic reticulum membrane. In terms of biological role, probable GTP-binding protein that may be involved in cell development. The sequence is that of Protein SEY1 homolog from Theileria annulata.